Here is a 212-residue protein sequence, read N- to C-terminus: Thymidylate kinase (212 aa).

10-17 (GPDGAGKT) lines the ATP pocket.

Belongs to the thymidylate kinase family.

The catalysed reaction is dTMP + ATP = dTDP + ADP. Functionally, phosphorylation of dTMP to form dTDP in both de novo and salvage pathways of dTTP synthesis. The protein is Thymidylate kinase of Exiguobacterium sibiricum (strain DSM 17290 / CCUG 55495 / CIP 109462 / JCM 13490 / 255-15).